A 1108-amino-acid polypeptide reads, in one-letter code: DNA-directed RNA polymerase subunit beta (1108 aa).

Belongs to the RNA polymerase beta chain family. In terms of assembly, in plastids the minimal PEP RNA polymerase catalytic core is composed of four subunits: alpha, beta, beta', and beta''. When a (nuclear-encoded) sigma factor is associated with the core the holoenzyme is formed, which can initiate transcription.

It is found in the plastid. It localises to the chloroplast. The catalysed reaction is RNA(n) + a ribonucleoside 5'-triphosphate = RNA(n+1) + diphosphate. Functionally, DNA-dependent RNA polymerase catalyzes the transcription of DNA into RNA using the four ribonucleoside triphosphates as substrates. The polypeptide is DNA-directed RNA polymerase subunit beta (Gnetum parvifolium (Small-leaved jointfir)).